Reading from the N-terminus, the 351-residue chain is Putative NBPF family member NBPF5 (351 aa).

2 coiled-coil regions span residues 10–43 (SERA…EKFL) and 69–115 (DSVL…KLRE). The segment at 157 to 285 (HLVHKLSPEN…VPPRHHDKSN (129 aa)) is disordered. Acidic residues predominate over residues 165–179 (ENDEDEDEDEDDKDE). One can recognise an Olduvai domain in the interval 174 to 261 (EDDKDEEVEK…EEEEALNIPP (88 aa)). Over residues 192–202 (EVQKTEEKEVP) the composition is skewed to basic and acidic residues. Residues 214-226 (SNSHNPSNSNQPH) show a composition bias toward low complexity. Composition is skewed to basic and acidic residues over residues 232-251 (TFKE…HPHD) and 264-273 (QNDHEEEEGK).

Belongs to the NBPF family. In terms of tissue distribution, expressed in brain and medulla.

It localises to the cytoplasm. This Homo sapiens (Human) protein is Putative NBPF family member NBPF5.